Consider the following 91-residue polypeptide: Potassium channel toxin BuTXK-beta (91 aa).

The signal sequence occupies residues 1–20 (MQRNLVVLLLLGMVALSSCG). A propeptide spanning residues 21-27 (LREKHFQ) is cleaved from the precursor. One can recognise a BetaSPN-type CS-alpha/beta domain in the interval 54–91 (QFGCPAYQGYCDDHCQDIKKEEGFCHGMKCKCGIPMGF). 3 cysteine pairs are disulfide-bonded: Cys-57-Cys-78, Cys-64-Cys-83, and Cys-68-Cys-85.

It belongs to the long chain scorpion toxin family. Class 1 subfamily. Expressed by the venom gland.

Its subcellular location is the secreted. Inhibits voltage-gated potassium channel. The chain is Potassium channel toxin BuTXK-beta from Buthus israelis (Israeli scorpion).